We begin with the raw amino-acid sequence, 176 residues long: MPIKPLIILPDPILREVSKPVEHVDSTIQKLADDMLETMYDAQGVGLAAIQIGIPLRMLVIDVSRNETQKNPLVIINPEILWLSDERNICKEGCLSIPEYYTEIERPKRLCVRYQDREGKQTEIEADHLLATCLQHEIDHLNGRLFIDHISKIKRDMVIRKFKKRAKEKNAQEAIL.

Fe cation contacts are provided by Cys-94 and His-136. Glu-137 is a catalytic residue. His-140 serves as a coordination point for Fe cation.

The protein belongs to the polypeptide deformylase family. It depends on Fe(2+) as a cofactor.

It catalyses the reaction N-terminal N-formyl-L-methionyl-[peptide] + H2O = N-terminal L-methionyl-[peptide] + formate. In terms of biological role, removes the formyl group from the N-terminal Met of newly synthesized proteins. Requires at least a dipeptide for an efficient rate of reaction. N-terminal L-methionine is a prerequisite for activity but the enzyme has broad specificity at other positions. This is Peptide deformylase from Bartonella quintana (strain Toulouse) (Rochalimaea quintana).